Here is a 145-residue protein sequence, read N- to C-terminus: Probable low molecular weight protein-tyrosine-phosphatase EpsP (145 aa).

Cysteine 9 functions as the Nucleophile in the catalytic mechanism. Arginine 15 is a catalytic residue. Aspartate 114 acts as the Proton donor in catalysis.

This sequence belongs to the low molecular weight phosphotyrosine protein phosphatase family.

It carries out the reaction O-phospho-L-tyrosyl-[protein] + H2O = L-tyrosyl-[protein] + phosphate. Its pathway is glycan metabolism; exopolysaccharide biosynthesis. Its function is as follows. May be involved in assembly or function of the EPS I polymerization/export complex and/or the EpsB ATPase. Alternatively it may function in the removal of the terminal phosphate from C55-isoprenyl pyrophosphate in order to recycle the C55-isoprenyl phosphate lipid carrier used in the synthesis of polysaccharide repeat units. The chain is Probable low molecular weight protein-tyrosine-phosphatase EpsP (epsP) from Ralstonia nicotianae (strain ATCC BAA-1114 / GMI1000) (Ralstonia solanacearum).